We begin with the raw amino-acid sequence, 102 residues long: MIISKFGLGQQIRHKLLGFPGVIIDIDPEYSLETPTWEEISGNDTPRSEPWYHVVMEDNEGQPMHTYLAEAHLMKEELSEHDHPSLNELAEVIQRRAPQLRH.

The protein belongs to the HspQ family.

The protein localises to the cytoplasm. Involved in the degradation of certain denaturated proteins, including DnaA, during heat shock stress. This chain is Heat shock protein HspQ, found in Pectobacterium atrosepticum (strain SCRI 1043 / ATCC BAA-672) (Erwinia carotovora subsp. atroseptica).